Here is a 276-residue protein sequence, read N- to C-terminus: uncharacterized protein (276 aa).

The 118-residue stretch at 20-137 folds into the AB hydrolase-1 domain; it reads PVLIFIPGAN…PPINTFLPDS (118 aa). The disordered stretch occupies residues 57-76; that stretch reads GESELTEPLPDSASNPDSDY.

The protein belongs to the AB hydrolase superfamily.

This is an uncharacterized protein from Staphylococcus aureus (strain N315).